Here is a 252-residue protein sequence, read N- to C-terminus: uncharacterized protein (252 aa).

The N-terminal stretch at 1-22 is a signal peptide; it reads MIHSKRLRLWLYLVLLAVFISA. Cys23 is lipidated: N-palmitoyl cysteine. A lipid anchor (S-diacylglycerol cysteine) is attached at Cys23.

It belongs to the staphylococcal tandem lipoprotein family.

The protein localises to the cell membrane. This is an uncharacterized protein from Staphylococcus aureus (strain MW2).